The following is an 89-amino-acid chain: Small ribosomal subunit protein uS15 (89 aa).

It belongs to the universal ribosomal protein uS15 family. As to quaternary structure, part of the 30S ribosomal subunit. Forms a bridge to the 50S subunit in the 70S ribosome, contacting the 23S rRNA.

Functionally, one of the primary rRNA binding proteins, it binds directly to 16S rRNA where it helps nucleate assembly of the platform of the 30S subunit by binding and bridging several RNA helices of the 16S rRNA. Forms an intersubunit bridge (bridge B4) with the 23S rRNA of the 50S subunit in the ribosome. This is Small ribosomal subunit protein uS15 from Photorhabdus luminescens (Xenorhabdus luminescens).